Reading from the N-terminus, the 388-residue chain is Putative N(4)-(beta-N-acetylglucosaminyl)-L-asparaginase GL17147 (388 aa).

Positions 1-20 are cleaved as a signal peptide; the sequence is MYKAQYLWLFGLVLISRSAT. 2 disulfide bridges follow: C94-C99 and C193-C209. T240 serves as the catalytic Nucleophile. Substrate is bound by residues 268–271 and 291–294; these read RVGD and TGDG. C351 and C378 are disulfide-bonded.

It belongs to the Ntn-hydrolase family. As to quaternary structure, heterotetramer of two alpha and two beta chains arranged as a dimer of alpha/beta heterodimers. Post-translationally, cleaved into an alpha and beta chain by autocatalysis; this activates the enzyme. The N-terminal residue of the beta subunit is responsible for the nucleophile hydrolase activity.

The enzyme catalyses N(4)-(beta-N-acetyl-D-glucosaminyl)-L-asparagine + H2O = N-acetyl-beta-D-glucosaminylamine + L-aspartate + H(+). Its function is as follows. Cleaves the GlcNAc-Asn bond which joins oligosaccharides to the peptide of asparagine-linked glycoproteins. The protein is Putative N(4)-(beta-N-acetylglucosaminyl)-L-asparaginase GL17147 of Drosophila persimilis (Fruit fly).